A 505-amino-acid chain; its full sequence is Glycerol kinase (505 aa).

An ADP-binding site is contributed by Thr-14. Residues Thr-14, Thr-15, and Ser-16 each contribute to the ATP site. Sn-glycerol 3-phosphate is bound at residue Thr-14. Position 18 (Arg-18) interacts with ADP. Residues Arg-84, Glu-85, Tyr-136, and Asp-246 each coordinate sn-glycerol 3-phosphate. Residues Arg-84, Glu-85, Tyr-136, Asp-246, and Gln-247 each coordinate glycerol. The ADP site is built by Thr-268 and Gly-311. 4 residues coordinate ATP: Thr-268, Gly-311, Gln-315, and Gly-412. The ADP site is built by Gly-412 and Asn-416.

This sequence belongs to the FGGY kinase family.

It carries out the reaction glycerol + ATP = sn-glycerol 3-phosphate + ADP + H(+). The protein operates within polyol metabolism; glycerol degradation via glycerol kinase pathway; sn-glycerol 3-phosphate from glycerol: step 1/1. Inhibited by fructose 1,6-bisphosphate (FBP). In terms of biological role, key enzyme in the regulation of glycerol uptake and metabolism. Catalyzes the phosphorylation of glycerol to yield sn-glycerol 3-phosphate. This is Glycerol kinase from Vibrio campbellii (strain ATCC BAA-1116).